Consider the following 1578-residue polypeptide: Neurexin-3 (1578 aa).

Positions methionine 1–glycine 27 are cleaved as a signal peptide. In terms of domain architecture, Laminin G-like 1 spans leucine 28–cysteine 202. At leucine 28–threonine 1503 the chain is on the extracellular side. Residues asparagine 58 and asparagine 105 are each glycosylated (N-linked (GlcNAc...) asparagine). An EGF-like 1 domain is found at alanine 198 to serine 235. Disulfide bonds link cysteine 202-cysteine 213, cysteine 207-cysteine 222, and cysteine 224-cysteine 234. Laminin G-like domains follow at residues glutamate 260–cysteine 444 and aspartate 451–cysteine 643. Aspartate 308, leucine 325, and methionine 378 together coordinate Ca(2+). 5 cysteine pairs are disulfide-bonded: cysteine 408–cysteine 444, cysteine 614–cysteine 643, cysteine 651–cysteine 662, cysteine 656–cysteine 671, and cysteine 673–cysteine 683. An EGF-like 2 domain is found at serine 647 to glutamate 684. Laminin G-like domains are found at residues isoleucine 689–cysteine 861 and aspartate 875–cysteine 1050. The Ca(2+) site is built by aspartate 736 and leucine 753. An N-linked (GlcNAc...) asparagine glycan is attached at asparagine 761. Arginine 811 contributes to the Ca(2+) binding site. Cystine bridges form between cysteine 1022/cysteine 1050, cysteine 1057/cysteine 1068, cysteine 1062/cysteine 1077, and cysteine 1079/cysteine 1089. Positions proline 1053–asparagine 1090 constitute an EGF-like 3 domain. Residues alanine 1094–valine 1294 enclose the Laminin G-like 6 domain. The Ca(2+) site is built by aspartate 1146 and isoleucine 1163. The N-linked (GlcNAc...) asparagine glycan is linked to asparagine 1193. Residues isoleucine 1245 and asparagine 1247 each coordinate Ca(2+). N-linked (GlcNAc...) asparagine glycans are attached at residues asparagine 1291 and asparagine 1335. Residues alanine 1328–alanine 1352 form a disordered region. The span at serine 1337–alanine 1352 shows a compositional bias: polar residues. A glycan (O-linked (Xyl...) (heparan sulfate) serine) is linked at serine 1351. Asparagine 1500 carries N-linked (GlcNAc...) asparagine glycosylation. The helical transmembrane segment at glycine 1504–methionine 1524 threads the bilayer. Residues tyrosine 1525–valine 1578 are Cytoplasmic-facing. A disordered region spans residues asparagine 1546–valine 1578.

The protein belongs to the neurexin family. In terms of assembly, the laminin G-like domain 2 binds to NXPH1. Isoform 8/alpha-4B binds to alpha-dystroglycan. The cytoplasmic C-terminal region binds to CASK. Specific isoforms bind neuroligins NLGN1, NLGN2 and NLGN3. Interacts with CLSTN3. In terms of processing, O-glycosylated; contains heparan sulfate. Heparan sulfate attachment is required for synapse development by mediating interactions with neuroligins. In terms of tissue distribution, brain.

It is found in the presynaptic cell membrane. Neuronal cell surface protein that may be involved in cell recognition and cell adhesion. May mediate intracellular signaling. This is Neurexin-3 (Nrxn3) from Rattus norvegicus (Rat).